Here is a 216-residue protein sequence, read N- to C-terminus: Imidazole glycerol phosphate synthase subunit HisH (216 aa).

A Glutamine amidotransferase type-1 domain is found at 2-216 (RVAIIDYGSG…LISNFLRWKP (215 aa)). C88 functions as the Nucleophile in the catalytic mechanism. Active-site residues include H196 and E198.

As to quaternary structure, heterodimer of HisH and HisF.

The protein resides in the cytoplasm. It carries out the reaction 5-[(5-phospho-1-deoxy-D-ribulos-1-ylimino)methylamino]-1-(5-phospho-beta-D-ribosyl)imidazole-4-carboxamide + L-glutamine = D-erythro-1-(imidazol-4-yl)glycerol 3-phosphate + 5-amino-1-(5-phospho-beta-D-ribosyl)imidazole-4-carboxamide + L-glutamate + H(+). The catalysed reaction is L-glutamine + H2O = L-glutamate + NH4(+). It functions in the pathway amino-acid biosynthesis; L-histidine biosynthesis; L-histidine from 5-phospho-alpha-D-ribose 1-diphosphate: step 5/9. In terms of biological role, IGPS catalyzes the conversion of PRFAR and glutamine to IGP, AICAR and glutamate. The HisH subunit catalyzes the hydrolysis of glutamine to glutamate and ammonia as part of the synthesis of IGP and AICAR. The resulting ammonia molecule is channeled to the active site of HisF. The chain is Imidazole glycerol phosphate synthase subunit HisH from Rhizobium meliloti (strain 1021) (Ensifer meliloti).